A 122-amino-acid chain; its full sequence is uncharacterized protein (122 aa).

Helical transmembrane passes span 43–63 and 76–96; these read PIIITLFIFSFVISRMIIFFI and AVADAIINSIALVCIIVILYF.

The protein resides in the membrane. This is an uncharacterized protein from Schizosaccharomyces pombe (strain 972 / ATCC 24843) (Fission yeast).